The following is a 410-amino-acid chain: Metal tolerance protein 3 (410 aa).

Residues Met1–Asp58 are disordered. At Met1–Ser114 the chain is on the cytoplasmic side. Positions Leu40 to Asp58 are enriched in basic and acidic residues. The helical transmembrane segment at Ala115–Ile135 threads the bilayer. Topologically, residues Lys136–Met140 are vacuolar. The chain crosses the membrane as a helical span at residues Ala141–Phe161. At Thr162 to Val184 the chain is on the cytoplasmic side. The helical transmembrane segment at Gly185 to Ile205 threads the bilayer. Residues Glu206–Gln221 lie on the Vacuolar side of the membrane. Residues Leu222–Tyr242 form a helical membrane-spanning segment. The Cytoplasmic segment spans residues Cys243–His258. Residues Tyr259–Gly275 traverse the membrane as a helical segment. At Asp276–Pro284 the chain is on the vacuolar side. A helical membrane pass occupies residues Val285–Tyr303. Residues Glu304–Pro410 lie on the Cytoplasmic side of the membrane.

The protein belongs to the cation diffusion facilitator (CDF) transporter (TC 2.A.4) family. SLC30A subfamily.

Its subcellular location is the vacuole membrane. Functionally, involved in sequestration of excess metal in the cytoplasm into vacuoles to maintain metal homeostasis. This chain is Metal tolerance protein 3 (MTP3), found in Oryza sativa subsp. japonica (Rice).